Reading from the N-terminus, the 320-residue chain is Malate dehydrogenase (320 aa).

NAD(+) is bound by residues 10-15 and Asp34; that span reads GSGMIG. Substrate contacts are provided by Arg83 and Arg89. Residues Asn96 and 119-121 contribute to the NAD(+) site; that span reads ITN. Substrate contacts are provided by Asn121 and Arg152. Catalysis depends on His176, which acts as the Proton acceptor.

This sequence belongs to the LDH/MDH superfamily. MDH type 3 family.

The catalysed reaction is (S)-malate + NAD(+) = oxaloacetate + NADH + H(+). Functionally, catalyzes the reversible oxidation of malate to oxaloacetate. The polypeptide is Malate dehydrogenase (Hyphomonas neptunium (strain ATCC 15444)).